The chain runs to 348 residues: Outer membrane protein assembly factor BamC (348 aa).

A signal peptide spans 1–24 (MATLLQTSKVMKVAGLSLVVFLAA). Residue Cys25 is the site of N-palmitoyl cysteine attachment. Cys25 carries the S-diacylglycerol cysteine lipid modification. The disordered stretch occupies residues 211–230 (SQQQEEAGQNNAKDSGALTV).

This sequence belongs to the BamC family. In terms of assembly, part of the Bam complex, which is composed of the outer membrane protein BamA, and four lipoproteins BamB, BamC, BamD and BamE.

The protein resides in the cell outer membrane. In terms of biological role, part of the outer membrane protein assembly complex, which is involved in assembly and insertion of beta-barrel proteins into the outer membrane. The sequence is that of Outer membrane protein assembly factor BamC from Xenorhabdus nematophila (strain ATCC 19061 / DSM 3370 / CCUG 14189 / LMG 1036 / NCIMB 9965 / AN6).